A 300-amino-acid chain; its full sequence is Phosphoribosylaminoimidazole-succinocarboxamide synthase (300 aa).

The protein belongs to the SAICAR synthetase family.

It carries out the reaction 5-amino-1-(5-phospho-D-ribosyl)imidazole-4-carboxylate + L-aspartate + ATP = (2S)-2-[5-amino-1-(5-phospho-beta-D-ribosyl)imidazole-4-carboxamido]succinate + ADP + phosphate + 2 H(+). Its pathway is purine metabolism; IMP biosynthesis via de novo pathway; 5-amino-1-(5-phospho-D-ribosyl)imidazole-4-carboxamide from 5-amino-1-(5-phospho-D-ribosyl)imidazole-4-carboxylate: step 1/2. This Methylibium petroleiphilum (strain ATCC BAA-1232 / LMG 22953 / PM1) protein is Phosphoribosylaminoimidazole-succinocarboxamide synthase.